We begin with the raw amino-acid sequence, 1024 residues long: Beta-galactosidase (1024 aa).

Substrate is bound by residues Asn103 and Asp202. A Na(+)-binding site is contributed by Asp202. Mg(2+)-binding residues include Glu417, His419, and Glu462. Residues Glu462 and 538–541 (EYAH) contribute to the substrate site. Glu462 functions as the Proton donor in the catalytic mechanism. Glu538 serves as the catalytic Nucleophile. Asn598 is a binding site for Mg(2+). Residues Phe602 and Asn605 each contribute to the Na(+) site. Residues Asn605 and Trp1000 each contribute to the substrate site.

Belongs to the glycosyl hydrolase 2 family. In terms of assembly, homotetramer. Mg(2+) serves as cofactor. It depends on Na(+) as a cofactor.

It carries out the reaction Hydrolysis of terminal non-reducing beta-D-galactose residues in beta-D-galactosides.. This is Beta-galactosidase from Escherichia coli O139:H28 (strain E24377A / ETEC).